A 145-amino-acid polypeptide reads, in one-letter code: 3-dehydroquinate dehydratase (145 aa).

The active-site Proton acceptor is Tyr-24. Substrate is bound by residues Asn-75, His-81, and Asp-88. Catalysis depends on His-101, which acts as the Proton donor. Residues 102–103 and Arg-112 contribute to the substrate site; that span reads IS.

This sequence belongs to the type-II 3-dehydroquinase family. As to quaternary structure, homododecamer.

It carries out the reaction 3-dehydroquinate = 3-dehydroshikimate + H2O. Its pathway is metabolic intermediate biosynthesis; chorismate biosynthesis; chorismate from D-erythrose 4-phosphate and phosphoenolpyruvate: step 3/7. Its function is as follows. Catalyzes a trans-dehydration via an enolate intermediate. In Corynebacterium glutamicum (strain R), this protein is 3-dehydroquinate dehydratase.